A 510-amino-acid polypeptide reads, in one-letter code: NAD(P)H-quinone oxidoreductase subunit 2 B, chloroplastic (510 aa).

The next 14 membrane-spanning stretches (helical) occupy residues 24–44 (LLLFHGSFIFPECILIFGLIL), 59–79 (WFYFISSTSLVISITALLFRW), 99–119 (IFQFLILLCSTLCIPLSVEYI), 124–144 (MAITEFLLFVLTATLGGMFLC), 149–169 (LITIFVALECFSLCSYLLSGY), 184–204 (LLMGGASSSILVYGFSWLYGL), 229–249 (ISIALIFITVGLGFKLSLAPF), 261–281 (PTPVVAFLSVTSKVAALALAT), 295–315 (WHLLLEILAILSMILGNLLAI), 323–343 (MLAYSSIGQIGYVIIGIIVGD), 354–374 (YMLFYISMNLGTFACIVLFGL), 395–415 (ALSLALCLLSLGGLPPLAGFF), 418–438 (LYLFWCGWQAGLYFLVSIGLL), and 484–504 (MTVCVIASTILGISMNPILAI).

This sequence belongs to the complex I subunit 2 family. As to quaternary structure, NDH is composed of at least 16 different subunits, 5 of which are encoded in the nucleus.

Its subcellular location is the plastid. The protein localises to the chloroplast thylakoid membrane. It carries out the reaction a plastoquinone + NADH + (n+1) H(+)(in) = a plastoquinol + NAD(+) + n H(+)(out). The enzyme catalyses a plastoquinone + NADPH + (n+1) H(+)(in) = a plastoquinol + NADP(+) + n H(+)(out). In terms of biological role, NDH shuttles electrons from NAD(P)H:plastoquinone, via FMN and iron-sulfur (Fe-S) centers, to quinones in the photosynthetic chain and possibly in a chloroplast respiratory chain. The immediate electron acceptor for the enzyme in this species is believed to be plastoquinone. Couples the redox reaction to proton translocation, and thus conserves the redox energy in a proton gradient. This is NAD(P)H-quinone oxidoreductase subunit 2 B, chloroplastic from Zea mays (Maize).